The following is a 277-amino-acid chain: Caspase-3 (277 aa).

An N-acetylmethionine modification is found at Met-1. 2 consecutive propeptides follow at residues 1 to 9 (MENTENSVD) and 10 to 28 (SKSI…KSVD). A compositionally biased stretch (polar residues) spans 1–10 (MENTENSVDS). Residues 1-25 (MENTENSVDSKSIKNSEPKIIHGSK) form a disordered region. Residue Lys-11 is modified to N6-acetyllysine. Positions 11–20 (KSIKNSEPKI) are enriched in basic and acidic residues. Ser-26 is modified (phosphoserine). Catalysis depends on residues His-121 and Cys-163. Cys-163 bears the S-nitrosocysteine; in inhibited form mark.

It belongs to the peptidase C14A family. Heterotetramer that consists of two anti-parallel arranged heterodimers, each one formed by a 17 kDa (p17) and a 12 kDa (p12) subunit. Interacts with BIRC6/bruce. In terms of processing, cleavage by granzyme B, caspase-6, caspase-8 and caspase-10 generates the two active subunits. Additional processing of the propeptides is likely due to the autocatalytic activity of the activated protease. Active heterodimers between the small subunit of caspase-7 protease and the large subunit of caspase-3 also occur and vice versa. Post-translationally, S-nitrosylated on its catalytic site cysteine in unstimulated cell lines and denitrosylated upon activation of the Fas apoptotic pathway, associated with an increase in intracellular caspase activity. Fas therefore activates caspase-3 not only by inducing the cleavage of the caspase zymogen to its active subunits, but also by stimulating the denitrosylation of its active site thiol. Ubiquitinated by BIRC6; this activity is inhibited by DIABLO/SMAC.

The protein resides in the cytoplasm. It catalyses the reaction Strict requirement for an Asp residue at positions P1 and P4. It has a preferred cleavage sequence of Asp-Xaa-Xaa-Asp-|- with a hydrophobic amino-acid residue at P2 and a hydrophilic amino-acid residue at P3, although Val or Ala are also accepted at this position.. With respect to regulation, inhibited by BIRC6; following inhibition of BIRC6-caspase binding by DIABLO/SMAC, BIRC6 is subjected to caspase cleavage, leading to an increase in active caspases. In terms of biological role, involved in the activation cascade of caspases responsible for apoptosis execution. At the onset of apoptosis, it proteolytically cleaves poly(ADP-ribose) polymerase PARP1 at a '216-Asp-|-Gly-217' bond. Cleaves and activates sterol regulatory element binding proteins (SREBPs) between the basic helix-loop-helix leucine zipper domain and the membrane attachment domain. Cleaves and activates caspase-6, -7 and -9 (CASP6, CASP7 and CASP9, respectively). Cleaves and inactivates interleukin-18 (IL18). Triggers cell adhesion in sympathetic neurons through RET cleavage. Cleaves IL-1 beta between an Asp and an Ala, releasing the mature cytokine which is involved in a variety of inflammatory processes. Cleaves and inhibits serine/threonine-protein kinase AKT1 in response to oxidative stress. Acts as an inhibitor of type I interferon production during virus-induced apoptosis by mediating cleavage of antiviral proteins CGAS, IRF3 and MAVS, thereby preventing cytokine overproduction. Also involved in pyroptosis by mediating cleavage and activation of gasdermin-E (GSDME). Cleaves XRCC4 and phospholipid scramblase proteins XKR4, XKR8 and XKR9, leading to promote phosphatidylserine exposure on apoptotic cell surface. Cleaves BIRC6 following inhibition of BIRC6-caspase binding by DIABLO/SMAC. In Saimiri boliviensis boliviensis (Bolivian squirrel monkey), this protein is Caspase-3 (CASP3).